Consider the following 261-residue polypeptide: MRVALGIEYDGRQYFGWQRQAEVDSVQAQLERALSKVANEPIRVHCAGRTDAGVHATGQVVHFETNAIRKDSAWTLGVNVNLPDDIAVRWVKIVDDEFHARFSATARRYRYMIYNYDFRPGILRSGVSHYRGNIDADIMHQAAQQFVGEHDFTSFRALHCQSKTPFRSVHEVNVTRQGMYICVDIKANAFLHHMVRNIVGTLLEIGLGNQRPEWIPQLLDLKDRSQAAPTAKPNGLYMVDVTYPERYELPKLALGPLFMLD.

The active-site Nucleophile is Asp51. Tyr109 contributes to the substrate binding site.

It belongs to the tRNA pseudouridine synthase TruA family. In terms of assembly, homodimer.

It carries out the reaction uridine(38/39/40) in tRNA = pseudouridine(38/39/40) in tRNA. Functionally, formation of pseudouridine at positions 38, 39 and 40 in the anticodon stem and loop of transfer RNAs. The protein is tRNA pseudouridine synthase A of Shewanella sediminis (strain HAW-EB3).